Consider the following 209-residue polypeptide: Thiamine-phosphate synthase (209 aa).

4-amino-2-methyl-5-(diphosphooxymethyl)pyrimidine-binding positions include 39 to 43 and asparagine 71; that span reads QLREK. 2 residues coordinate Mg(2+): aspartate 72 and aspartate 91. Serine 110 lines the 4-amino-2-methyl-5-(diphosphooxymethyl)pyrimidine pocket. A 2-[(2R,5Z)-2-carboxy-4-methylthiazol-5(2H)-ylidene]ethyl phosphate-binding site is contributed by 136-138; it reads TGT. Lysine 139 serves as a coordination point for 4-amino-2-methyl-5-(diphosphooxymethyl)pyrimidine. 2-[(2R,5Z)-2-carboxy-4-methylthiazol-5(2H)-ylidene]ethyl phosphate is bound by residues glycine 166 and 186–187; that span reads VS.

It belongs to the thiamine-phosphate synthase family. Mg(2+) serves as cofactor.

The catalysed reaction is 2-[(2R,5Z)-2-carboxy-4-methylthiazol-5(2H)-ylidene]ethyl phosphate + 4-amino-2-methyl-5-(diphosphooxymethyl)pyrimidine + 2 H(+) = thiamine phosphate + CO2 + diphosphate. The enzyme catalyses 2-(2-carboxy-4-methylthiazol-5-yl)ethyl phosphate + 4-amino-2-methyl-5-(diphosphooxymethyl)pyrimidine + 2 H(+) = thiamine phosphate + CO2 + diphosphate. It catalyses the reaction 4-methyl-5-(2-phosphooxyethyl)-thiazole + 4-amino-2-methyl-5-(diphosphooxymethyl)pyrimidine + H(+) = thiamine phosphate + diphosphate. It participates in cofactor biosynthesis; thiamine diphosphate biosynthesis; thiamine phosphate from 4-amino-2-methyl-5-diphosphomethylpyrimidine and 4-methyl-5-(2-phosphoethyl)-thiazole: step 1/1. Its function is as follows. Condenses 4-methyl-5-(beta-hydroxyethyl)thiazole monophosphate (THZ-P) and 2-methyl-4-amino-5-hydroxymethyl pyrimidine pyrophosphate (HMP-PP) to form thiamine monophosphate (TMP). This Clostridium beijerinckii (strain ATCC 51743 / NCIMB 8052) (Clostridium acetobutylicum) protein is Thiamine-phosphate synthase.